A 488-amino-acid chain; its full sequence is Ribosomal protein uS12 methylthiotransferase RimO (488 aa).

Positions 4–120 (RKVHFVSLGC…LGRVLAGDAE (117 aa)) constitute an MTTase N-terminal domain. Residues C13, C49, C83, C155, C159, and C162 each coordinate [4Fe-4S] cluster. A Radical SAM core domain is found at 141–377 (STPGGSAYVK…MTLQRRISHK (237 aa)). The 69-residue stretch at 380-448 (AAMIGRELEV…DYDLVGELLD (69 aa)) folds into the TRAM domain.

It belongs to the methylthiotransferase family. RimO subfamily. The cofactor is [4Fe-4S] cluster.

The protein resides in the cytoplasm. The catalysed reaction is L-aspartate(89)-[ribosomal protein uS12]-hydrogen + (sulfur carrier)-SH + AH2 + 2 S-adenosyl-L-methionine = 3-methylsulfanyl-L-aspartate(89)-[ribosomal protein uS12]-hydrogen + (sulfur carrier)-H + 5'-deoxyadenosine + L-methionine + A + S-adenosyl-L-homocysteine + 2 H(+). Its function is as follows. Catalyzes the methylthiolation of an aspartic acid residue of ribosomal protein uS12. In Sorangium cellulosum (strain So ce56) (Polyangium cellulosum (strain So ce56)), this protein is Ribosomal protein uS12 methylthiotransferase RimO.